The following is a 330-amino-acid chain: MATH domain and coiled-coil domain-containing protein At3g58210 (330 aa).

One can recognise an MATH domain in the interval 6-133; the sequence is DNKFTWVIQN…NDELKIVAEV (128 aa). Residues 263-314 adopt a coiled-coil conformation; the sequence is FKVDWLEKKLEEVKKKKEEEQTGEARIQELEEELKEFKQKCLDREAMLEKEK.

This Arabidopsis thaliana (Mouse-ear cress) protein is MATH domain and coiled-coil domain-containing protein At3g58210.